The primary structure comprises 258 residues: Deoxyribose-phosphate aldolase (258 aa).

Residue Asp-102 is the Proton donor/acceptor of the active site. Catalysis depends on Lys-165, which acts as the Schiff-base intermediate with acetaldehyde. Lys-199 acts as the Proton donor/acceptor in catalysis.

It belongs to the DeoC/FbaB aldolase family. DeoC type 2 subfamily.

Its subcellular location is the cytoplasm. The catalysed reaction is 2-deoxy-D-ribose 5-phosphate = D-glyceraldehyde 3-phosphate + acetaldehyde. Its pathway is carbohydrate degradation; 2-deoxy-D-ribose 1-phosphate degradation; D-glyceraldehyde 3-phosphate and acetaldehyde from 2-deoxy-alpha-D-ribose 1-phosphate: step 2/2. In terms of biological role, catalyzes a reversible aldol reaction between acetaldehyde and D-glyceraldehyde 3-phosphate to generate 2-deoxy-D-ribose 5-phosphate. The sequence is that of Deoxyribose-phosphate aldolase from Aliivibrio fischeri (strain ATCC 700601 / ES114) (Vibrio fischeri).